Consider the following 736-residue polypeptide: MKHLIIVESPAKAKTIKNFLDKNYEVVASKGHVRDLSKFALGIKIDETGFTPNYVVDKDHKELVKQIIELSKKASITYIATDEDREGEAIGYHVACLIGGKLESYPRIVFHEITQNAILNVLKTPRKIDMFKVNAQQARRLLDRIVGFKLSSLIASKITKGLSAGRVQSAALKLVIDREKEIRPFKPLTYFTLDALFEPHLEAQLISYKGNKLKAQELIDEKKAQEIKNELEKESYIISSIIKKSKKSPTPPPFMTSTLQQSASSLLGFSPTKTMSIAQKLYEGVATPQGVMGVITYMRTDSLNIAKEALEEARAKILKDYGKDYLPPKAKVYSSKNKNAQEAHEAIRPTSIILEPNALKDYLKPEELKLYTLIYKRFLASQMQDALFESQSVVVACEKGEFKASGRKLLFDGHYKILGNDDKDKLLPNLKENDPIKLEKLESNAHVTEPPARYSEASLIKVLESLGIGRPSTYAPTISLLQNRDYIKVEKKQISALESAFKVIEILEKHFEEIVDSKFSASLEEELDNIAQNKADYQQVLKDFYYPFMDKIEAGKKNIISQKVHEKTGQSCPKCGGELVKKNSRYGEFIACNNYPKCKYIKQTENANDEAKQELCEKCGGEMVQKFSRNGAFLACNNYPECKNTKSLKNTPNAKETIEGVKCPECGGDIALKRSKKGSFYGCNNYPKCNFLSNHKPINKRCEKCHYLMSERIYRKKKAHECIQCKERVFLEEDNG.

The Toprim domain maps to 2-113 (KHLIIVESPA…SYPRIVFHEI (112 aa)). Glu-8 and Asp-82 together coordinate Mg(2+). Residues 129–552 (DMFKVNAQQA…DFYYPFMDKI (424 aa)) form the Topo IA-type catalytic domain. Residues 163 to 168 (SAGRVQ) are interaction with DNA. Tyr-297 (O-(5'-phospho-DNA)-tyrosine intermediate) is an active-site residue. 4 C4-type zinc fingers span residues 572-598 (CPKCGGELVKKNSRYGEFIACNNYPKC), 616-642 (CEKCGGEMVQKFSRNGAFLACNNYPEC), 663-689 (CPECGGDIALKRSKKGSFYGCNNYPKC), and 702-725 (CEKCHYLMSERIYRKKKAHECIQC).

Belongs to the type IA topoisomerase family. In terms of assembly, monomer. The cofactor is Mg(2+).

It carries out the reaction ATP-independent breakage of single-stranded DNA, followed by passage and rejoining.. Releases the supercoiling and torsional tension of DNA, which is introduced during the DNA replication and transcription, by transiently cleaving and rejoining one strand of the DNA duplex. Introduces a single-strand break via transesterification at a target site in duplex DNA. The scissile phosphodiester is attacked by the catalytic tyrosine of the enzyme, resulting in the formation of a DNA-(5'-phosphotyrosyl)-enzyme intermediate and the expulsion of a 3'-OH DNA strand. The free DNA strand then undergoes passage around the unbroken strand, thus removing DNA supercoils. Finally, in the religation step, the DNA 3'-OH attacks the covalent intermediate to expel the active-site tyrosine and restore the DNA phosphodiester backbone. The sequence is that of DNA topoisomerase 1 from Helicobacter pylori (strain J99 / ATCC 700824) (Campylobacter pylori J99).